We begin with the raw amino-acid sequence, 393 residues long: ATP phosphoribosyltransferase regulatory subunit (393 aa).

It belongs to the class-II aminoacyl-tRNA synthetase family. HisZ subfamily. In terms of assembly, heteromultimer composed of HisG and HisZ subunits.

It is found in the cytoplasm. The protein operates within amino-acid biosynthesis; L-histidine biosynthesis; L-histidine from 5-phospho-alpha-D-ribose 1-diphosphate: step 1/9. Functionally, required for the first step of histidine biosynthesis. May allow the feedback regulation of ATP phosphoribosyltransferase activity by histidine. This is ATP phosphoribosyltransferase regulatory subunit from Shouchella clausii (strain KSM-K16) (Alkalihalobacillus clausii).